Here is a 304-residue protein sequence, read N- to C-terminus: Putative S-adenosyl-L-methionine-dependent methyltransferase MAV_4236 (304 aa).

Residues Asp-129 and 158–159 (DL) contribute to the S-adenosyl-L-methionine site.

This sequence belongs to the UPF0677 family.

Exhibits S-adenosyl-L-methionine-dependent methyltransferase activity. The sequence is that of Putative S-adenosyl-L-methionine-dependent methyltransferase MAV_4236 from Mycobacterium avium (strain 104).